A 914-amino-acid chain; its full sequence is Alanine--tRNA ligase (914 aa).

Zn(2+) is bound by residues His-608, His-612, Cys-711, and His-715.

Belongs to the class-II aminoacyl-tRNA synthetase family. The cofactor is Zn(2+).

Its subcellular location is the cytoplasm. The enzyme catalyses tRNA(Ala) + L-alanine + ATP = L-alanyl-tRNA(Ala) + AMP + diphosphate. Functionally, catalyzes the attachment of alanine to tRNA(Ala) in a two-step reaction: alanine is first activated by ATP to form Ala-AMP and then transferred to the acceptor end of tRNA(Ala). Also edits incorrectly charged Ser-tRNA(Ala) and Gly-tRNA(Ala) via its editing domain. This chain is Alanine--tRNA ligase, found in Methanoregula boonei (strain DSM 21154 / JCM 14090 / 6A8).